The sequence spans 607 residues: Elongation factor 4 (607 aa).

The region spanning 6-188 (DRIRNFSIIA…AIVARIPAPK (183 aa)) is the tr-type G domain. GTP contacts are provided by residues 18–23 (DHGKST) and 135–138 (NKID).

It belongs to the TRAFAC class translation factor GTPase superfamily. Classic translation factor GTPase family. LepA subfamily.

It localises to the cell inner membrane. It catalyses the reaction GTP + H2O = GDP + phosphate + H(+). Its function is as follows. Required for accurate and efficient protein synthesis under certain stress conditions. May act as a fidelity factor of the translation reaction, by catalyzing a one-codon backward translocation of tRNAs on improperly translocated ribosomes. Back-translocation proceeds from a post-translocation (POST) complex to a pre-translocation (PRE) complex, thus giving elongation factor G a second chance to translocate the tRNAs correctly. Binds to ribosomes in a GTP-dependent manner. The chain is Elongation factor 4 from Rhizorhabdus wittichii (strain DSM 6014 / CCUG 31198 / JCM 15750 / NBRC 105917 / EY 4224 / RW1) (Sphingomonas wittichii).